We begin with the raw amino-acid sequence, 198 residues long: C4b-binding protein beta chain (198 aa).

A signal peptide spans 1-17 (MFFWLMCYLVDVWLISA). The Sushi 1; atypical; lacks a Cys domain occupies 22–77 (HCPDPLLVTDEFSSLEPVNVNDTFMFKCNEHCIFKGSNWSQCRENHTRVTHSPVSK). N-linked (GlcNAc...) asparagine glycosylation is found at Asn-42, Asn-59, and Asn-66. Residues 79–135 (RDCGPPETPTHGYFEGRDFKSGSTITYYCEARYRLVGTQHQQCIDGEWTSAPPICEL) form the Sushi 2 domain. 2 disulfide bridges follow: Cys-81-Cys-121 and Cys-107-Cys-133.

In terms of assembly, disulfide-linked complex of alpha and beta chains.

The protein resides in the secreted. In terms of biological role, controls the classical pathway of complement activation. It binds as a cofactor to C3b/C4b inactivator (C3bINA), which then hydrolyzes the complement fragment C4b. It also accelerates the degradation of the C4bC2a complex (C3 convertase) by dissociating the complement fragment C2a. It also interacts with serum amyloid P component. The polypeptide is C4b-binding protein beta chain (C4BPB) (Bos taurus (Bovine)).